Consider the following 837-residue polypeptide: Tuftelin-interacting protein 11 (837 aa).

Basic and acidic residues-rich tracts occupy residues 1-13 and 50-64; these read MSLS…GEGR and TYGV…DERP. Disordered stretches follow at residues 1-21 and 50-136; these read MSLS…DDER and TYGV…AGGT. Positions 1–50 are required for interaction with DHX15; the sequence is MSLSHLYRDGEGRVDDDDDERENFEITDWDLQNEFNPNRQRHWQTKEEAT. Phosphoserine occurs at positions 2, 59, and 98. The segment covering 91–102 has biased composition (acidic residues); the sequence is EEAELDDSEDEE. A compositionally biased stretch (basic and acidic residues) spans 103 to 116; sequence KPGKQEELPKDLGP. Ser144 carries the post-translational modification Phosphoserine. The G-patch domain occupies 149 to 195; the sequence is TKGIGQKLLQKMGYVPGRGLGKNAQGIINPIEAKQRKGKGAVGAYGS. The segment at 183-236 is disordered; sequence QRKGKGAVGAYGSERTTQSLQDFPVVDSEEEAEEEFQKELSQWRKDPSGSKKKP. Position 210 is a phosphoserine (Ser210). Over residues 217–231 the composition is skewed to basic and acidic residues; the sequence is EFQKELSQWRKDPSG. Residues 700-705 carry the Nuclear localization signal motif; sequence VKDKFN. The interval 710–734 is required for nuclear speckle localization; the sequence is IMNRAVSSNVGAYMQPGARENIAYL.

It belongs to the TFP11/STIP family. As to quaternary structure, identified in the spliceosome C complex. Found in the Intron Large (IL) complex, a post-mRNA release spliceosomal complex containing the excised intron, U2, U5 and U6 snRNPs, and splicing factors. Interacts with TUFT1. Interacts with DHX15; indicative for a recruitment of DHX15 to the IL complex. Interacts with GCFC2.

It localises to the cytoplasm. The protein localises to the nucleus. Functionally, involved in pre-mRNA splicing, specifically in spliceosome disassembly during late-stage splicing events. Intron turnover seems to proceed through reactions in two lariat-intron associated complexes termed Intron Large (IL) and Intron Small (IS). In cooperation with DHX15 seems to mediate the transition of the U2, U5 and U6 snRNP-containing IL complex to the snRNP-free IS complex leading to efficient debranching and turnover of excised introns. May play a role in the differentiation of ameloblasts and odontoblasts or in the forming of the enamel extracellular matrix. The protein is Tuftelin-interacting protein 11 (TFIP11) of Oryctolagus cuniculus (Rabbit).